A 615-amino-acid polypeptide reads, in one-letter code: Zinc finger protein 181 (615 aa).

A KRAB domain is found at 48–120 (VTFSDVAIDF…EKKLSKGLIP (73 aa)). Glycyl lysine isopeptide (Lys-Gly) (interchain with G-Cter in SUMO2) cross-links involve residues Lys-153 and Lys-170. C2H2-type zinc fingers lie at residues 281-303 (YTCS…WRIH), 309-331 (YECR…LISH), 337-359 (YKCI…QSTH), 365-387 (YECM…LRIH), 393-415 (YECR…QKIH), 421-443 (YECR…QRIH), 449-471 (YECN…QSIH), 477-499 (FECQ…LRNH), 505-527 (YECS…HRIH), 533-555 (YECI…QRIH), and 561-583 (YKCN…QRVH).

Belongs to the krueppel C2H2-type zinc-finger protein family.

It is found in the nucleus. Functionally, may be involved in transcriptional regulation. The sequence is that of Zinc finger protein 181 (ZNF181) from Pongo abelii (Sumatran orangutan).